The following is a 116-amino-acid chain: Large ribosomal subunit protein uL18 (116 aa).

This sequence belongs to the universal ribosomal protein uL18 family. As to quaternary structure, part of the 50S ribosomal subunit; part of the 5S rRNA/L5/L18/L25 subcomplex. Contacts the 5S and 23S rRNAs.

This is one of the proteins that bind and probably mediate the attachment of the 5S RNA into the large ribosomal subunit, where it forms part of the central protuberance. The protein is Large ribosomal subunit protein uL18 of Cellvibrio japonicus (strain Ueda107) (Pseudomonas fluorescens subsp. cellulosa).